We begin with the raw amino-acid sequence, 488 residues long: Bifunctional protein NifU/MnmA (488 aa).

Residues 1–130 (MPERYGPRVI…DYWSRQGDAL (130 aa)) are nifU-like protein. The tRNA-specific 2-thiouridylase MnmA stretch occupies residues 143-488 (RRGVVAAMSG…GGGIIARRDA (346 aa)). ATP is bound by residues 149–156 (AMSGGVDS) and phenylalanine 175. The active-site Nucleophile is the cysteine 240. A disulfide bond links cysteine 240 and cysteine 333. Glycine 264 is an ATP binding site. An interaction with tRNA region spans residues 283–285 (KDQ). The active-site Cysteine persulfide intermediate is cysteine 333. An interaction with tRNA region spans residues 433 to 434 (RY).

This sequence in the N-terminal section; belongs to the NifU family. In the C-terminal section; belongs to the MnmA/TRMU family.

The protein resides in the cytoplasm. It catalyses the reaction S-sulfanyl-L-cysteinyl-[protein] + uridine(34) in tRNA + AH2 + ATP = 2-thiouridine(34) in tRNA + L-cysteinyl-[protein] + A + AMP + diphosphate + H(+). In terms of biological role, may be involved in the formation or repair of [Fe-S] clusters present in iron-sulfur proteins. Its function is as follows. Catalyzes the 2-thiolation of uridine at the wobble position (U34) of tRNA, leading to the formation of s(2)U34. The chain is Bifunctional protein NifU/MnmA (nifU/mnmA) from Rubrobacter xylanophilus (strain DSM 9941 / JCM 11954 / NBRC 16129 / PRD-1).